The primary structure comprises 513 residues: Sulfhydryl oxidase 1 (513 aa).

The first 30 residues, 1 to 30 (MAAAAVARRVVLVLVLAAASLAAAPRGAAA), serve as a signal peptide directing secretion. In terms of domain architecture, Thioredoxin spans 31–174 (RSLGGREGPG…LLKWINNQMK (144 aa)). Asparagine 51 carries an N-linked (GlcNAc...) asparagine glycan. Residues cysteine 76 and cysteine 79 each act as nucleophile in the active site. A disulfide bridge links cysteine 76 with cysteine 79. Residues asparagine 193 and asparagine 266 are each glycosylated (N-linked (GlcNAc...) asparagine). Cysteine 301 and cysteine 313 are oxidised to a cystine. An ERV/ALR sulfhydryl oxidase domain is found at 304–406 (SKSETRGFSC…GDPLFPKVTW (103 aa)). FAD-binding positions include arginine 309, tryptophan 316, histidine 320, glutamate 350, histidine 354, 377 to 384 (WSTHNKVN), lysine 403, and tryptophan 406. A disulfide bridge links cysteine 348 with cysteine 351. Cysteine 412 and cysteine 415 are disulfide-bonded.

FAD serves as cofactor.

Its subcellular location is the secreted. It carries out the reaction 2 R'C(R)SH + O2 = R'C(R)S-S(R)CR' + H2O2. Catalyzes the oxidation of sulfhydryl groups in peptide and protein thiols to disulfides with the reduction of oxygen to hydrogen peroxide. May contribute to disulfide bond formation in a variety of secreted proteins. In Oryza sativa subsp. japonica (Rice), this protein is Sulfhydryl oxidase 1 (QSOX1).